We begin with the raw amino-acid sequence, 133 residues long: Large ribosomal subunit protein bL17 (133 aa).

The protein belongs to the bacterial ribosomal protein bL17 family. Part of the 50S ribosomal subunit. Contacts protein L32.

The sequence is that of Large ribosomal subunit protein bL17 from Verminephrobacter eiseniae (strain EF01-2).